The chain runs to 767 residues: ABC transporter B family member 4 (767 aa).

The tract at residues 81–104 (NYSSSSNSGNNNNNNYNNKNNNNN) is disordered. 5 consecutive transmembrane segments (helical) span residues 208 to 228 (IWLF…GLQI), 252 to 272 (AIFI…MISV), 324 to 344 (VSLG…LILI), 350 to 370 (LGMM…AGWL), and 429 to 449 (IGIF…LVYW). The 281-residue stretch at 211-491 (FGFGIITAFF…LSILFTQIMS (281 aa)) folds into the ABC transmembrane type-1 domain. Residues 524 to 760 (IKFINVDFKY…KGLYYKLVQR (237 aa)) form the ABC transporter domain. 559–566 (GSSGGGKS) is an ATP binding site.

It belongs to the ABC transporter superfamily. ABCB family. Multidrug resistance exporter (TC 3.A.1.201) subfamily.

It is found in the membrane. This Dictyostelium discoideum (Social amoeba) protein is ABC transporter B family member 4 (abcB4).